The following is a 110-amino-acid chain: Insulin-2 (110 aa).

Positions 1-24 (MALWMRFLPLLALLFLWESHPTQA) are cleaved as a signal peptide. Disulfide bonds link Cys31–Cys96, Cys43–Cys109, and Cys95–Cys100. A propeptide spans 57 to 87 (EVEDPQVAQLELGGGPGAGDLQTLALEVAQQ) (c peptide).

The protein belongs to the insulin family. In terms of assembly, heterodimer of a B chain and an A chain linked by two disulfide bonds.

It is found in the secreted. In terms of biological role, insulin decreases blood glucose concentration. It increases cell permeability to monosaccharides, amino acids and fatty acids. It accelerates glycolysis, the pentose phosphate cycle, and glycogen synthesis in liver. The polypeptide is Insulin-2 (Ins2) (Mus musculus (Mouse)).